A 506-amino-acid polypeptide reads, in one-letter code: Histidine ammonia-lyase (506 aa).

Positions 143–145 (ASG) form a cross-link, 5-imidazolinone (Ala-Gly). Position 144 is a 2,3-didehydroalanine (Ser) (Ser-144).

The protein belongs to the PAL/histidase family. Contains an active site 4-methylidene-imidazol-5-one (MIO), which is formed autocatalytically by cyclization and dehydration of residues Ala-Ser-Gly.

The protein localises to the cytoplasm. The enzyme catalyses L-histidine = trans-urocanate + NH4(+). It participates in amino-acid degradation; L-histidine degradation into L-glutamate; N-formimidoyl-L-glutamate from L-histidine: step 1/3. The sequence is that of Histidine ammonia-lyase from Salmonella typhi.